Reading from the N-terminus, the 67-residue chain is Small ribosomal subunit protein eS17 (67 aa).

Belongs to the eukaryotic ribosomal protein eS17 family.

The protein is Small ribosomal subunit protein eS17 of Pyrococcus horikoshii (strain ATCC 700860 / DSM 12428 / JCM 9974 / NBRC 100139 / OT-3).